The primary structure comprises 82 residues: MKLLLLLIVSASMLIESLVNADGYIRKRDGCKLSCLFGNEGCNKECKSYGGSYGYCWTWGLACWCEGLPDDKTWKSETNTCG.

The N-terminal stretch at 1 to 21 (MKLLLLLIVSASMLIESLVNA) is a signal peptide. The region spanning 22 to 82 (DGYIRKRDGC…TWKSETNTCG (61 aa)) is the LCN-type CS-alpha/beta domain. Cystine bridges form between C31/C81, C35/C56, C42/C63, and C46/C65.

The protein belongs to the long (4 C-C) scorpion toxin superfamily. Sodium channel inhibitor family. Beta subfamily. In terms of tissue distribution, expressed by the venom gland.

It localises to the secreted. Functionally, depressant insect beta-toxins cause a transient contraction paralysis followed by a slow flaccid paralysis. They bind voltage-independently at site-4 of sodium channels and shift the voltage of activation toward more negative potentials thereby affecting sodium channel activation and promoting spontaneous and repetitive firing. Aside from typical beta-toxin effects, this toxin also affects the inactivation process and ion selectivity of the insect voltage-gated sodium channel. This toxin is active only on insects. Is active on the insect voltage-gated sodium channel para. In vivo, when injected intraperitoneally, it exhibits analgesic activity, increasing hot plate and tail flick withdrawal latencies in a dose-dependent fashion. This phenomenon might be partly due to an inhibitory mechanism activated by noxious stimuli. The protein is Beta-insect depressant toxin LqqIT2 of Leiurus quinquestriatus quinquestriatus (Egyptian scorpion).